We begin with the raw amino-acid sequence, 343 residues long: uncharacterized protein (343 aa).

Disordered stretches follow at residues 1-25, 62-119, and 169-188; these read MSSK…LSGT, KNIR…DCSD, and NPKI…TKKS. The span at 62 to 71 shows a compositional bias: basic residues; the sequence is KNIRQFKKSQ. The segment covering 72–81 has biased composition (basic and acidic residues); sequence NKTDTEKSGE. Acidic residues predominate over residues 83-107; that stretch reads NDSDYSDYSDNSDDVDDLDDVDDLN.

This is an uncharacterized protein from Acanthamoeba polyphaga (Amoeba).